The sequence spans 500 residues: NAD(P)H-quinone oxidoreductase subunit 2 A, chloroplastic (500 aa).

The next 13 helical transmembrane spans lie at 14-34 (LLLF…GLIL), 47-67 (IPWF…ALLF), 89-109 (IFQF…VEYI), 114-134 (MAIT…MFLC), 139-159 (FITI…LSGY), 173-193 (YLLM…WLYG), 217-237 (PGIS…LSPA), 285-305 (WHLL…LIAI), 313-333 (MLAY…IVGD), 344-364 (YMLF…LFGL), 385-405 (ALSL…AGFF), 408-428 (LHLF…IGLL), and 474-494 (MIVC…IIAI).

Belongs to the complex I subunit 2 family. As to quaternary structure, NDH is composed of at least 16 different subunits, 5 of which are encoded in the nucleus.

The protein resides in the plastid. It is found in the chloroplast thylakoid membrane. It catalyses the reaction a plastoquinone + NADH + (n+1) H(+)(in) = a plastoquinol + NAD(+) + n H(+)(out). It carries out the reaction a plastoquinone + NADPH + (n+1) H(+)(in) = a plastoquinol + NADP(+) + n H(+)(out). In terms of biological role, NDH shuttles electrons from NAD(P)H:plastoquinone, via FMN and iron-sulfur (Fe-S) centers, to quinones in the photosynthetic chain and possibly in a chloroplast respiratory chain. The immediate electron acceptor for the enzyme in this species is believed to be plastoquinone. Couples the redox reaction to proton translocation, and thus conserves the redox energy in a proton gradient. The chain is NAD(P)H-quinone oxidoreductase subunit 2 A, chloroplastic from Pelargonium hortorum (Common geranium).